Reading from the N-terminus, the 566-residue chain is 4-coumarate--CoA ligase-like 6 (566 aa).

The tract at residues Met1–Pro21 is disordered. The ATP site is built by Ser212, Ser213, Gly214, Thr215, Thr216, and Lys220. Tyr263 provides a ligand contact to (E)-4-coumaroyl-AMP. Residue Arg284 participates in CoA binding. An SBD1 region spans residues Asp286 to Gln356. Residues Ala334, Gln356, Gly357, and Thr361 each coordinate (E)-4-coumaroyl-AMP. 5 residues coordinate ATP: Gln356, Gly357, Thr361, Asp442, and Arg457. Residues Gly357–Tyr421 are SBD2. Residues Lys459 and Lys463 each coordinate (E)-4-coumaroyl-AMP. CoA contacts are provided by Lys465 and Gly466. Residue Lys548 participates in ATP binding. The Microbody targeting signal motif lies at Ser564–Leu566.

The protein belongs to the ATP-dependent AMP-binding enzyme family. Requires Mg(2+) as cofactor. Expressed at very low level in leaves.

Its subcellular location is the peroxisome. The catalysed reaction is (E)-4-coumarate + ATP + CoA = (E)-4-coumaroyl-CoA + AMP + diphosphate. It catalyses the reaction (E)-4-coumarate + ATP + H(+) = (E)-4-coumaroyl-AMP + diphosphate. It carries out the reaction (E)-4-coumaroyl-AMP + CoA = (E)-4-coumaroyl-CoA + AMP + H(+). The enzyme catalyses (E)-ferulate + ATP + CoA = (E)-feruloyl-CoA + AMP + diphosphate. The catalysed reaction is (E)-ferulate + ATP + H(+) = (E)-feruloyl-AMP + diphosphate. It catalyses the reaction (E)-feruloyl-AMP + CoA = (E)-feruloyl-CoA + AMP + H(+). It carries out the reaction (E)-caffeate + ATP + CoA = (E)-caffeoyl-CoA + AMP + diphosphate. The enzyme catalyses (E)-caffeate + ATP + H(+) = (E)-caffeoyl-AMP + diphosphate. The catalysed reaction is (E)-caffeoyl-AMP + CoA = (E)-caffeoyl-CoA + AMP + H(+). It catalyses the reaction (E)-cinnamate + ATP + CoA = (E)-cinnamoyl-CoA + AMP + diphosphate. It carries out the reaction 4-hydroxybenzoate + ATP + CoA = 4-hydroxybenzoyl-CoA + AMP + diphosphate. The enzyme catalyses tetradecanoate + ATP + CoA = tetradecanoyl-CoA + AMP + diphosphate. The catalysed reaction is hexanoate + ATP + CoA = hexanoyl-CoA + AMP + diphosphate. It catalyses the reaction heptanoate + ATP + CoA = heptanoyl-CoA + AMP + diphosphate. Functionally, contributes to jasmonic acid biosynthesis by initiating the beta-oxidative chain shortening of its precursors. Acts as a carboxylate--CoA ligase that can use preferentially p-coumarate, ferulate and caffeate as substrates and, with a lower efficiency, (E)-cinnamate and 4-hydroxybenzoate as substrates. Involved in the biosynthesis of ubiquinone from phenylalanine by activating the propyl side chain of 4-coumarate, and possibly trans-cinnamate and 4-hydroxybenzoate, for subsequent beta-oxidative shortening and the formation of the benzenoid moiety of ubiquinone. Follows a two-step reaction mechanism, wherein the carboxylate substrate first undergoes adenylation by ATP, followed by a thioesterification in the presence of CoA to yield the final CoA thioester. The chain is 4-coumarate--CoA ligase-like 6 from Arabidopsis thaliana (Mouse-ear cress).